The primary structure comprises 631 residues: Chaperone protein HtpG (631 aa).

Positions 1-339 are a; substrate-binding; the sequence is MSTNQETRGF…SNDLPLNVSR (339 aa). The tract at residues 340–555 is b; it reads EILQDNKVTS…DDQMTTQMAK (216 aa). The interval 556-631 is c; sequence LFAAAGQAMP…NTLLSKLTSH (76 aa).

Belongs to the heat shock protein 90 family. Homodimer.

The protein localises to the cytoplasm. Its function is as follows. Molecular chaperone. Has ATPase activity. This is Chaperone protein HtpG from Pasteurella multocida (strain Pm70).